The chain runs to 210 residues: N-(5'-phosphoribosyl)anthranilate isomerase (210 aa).

The protein belongs to the TrpF family.

The enzyme catalyses N-(5-phospho-beta-D-ribosyl)anthranilate = 1-(2-carboxyphenylamino)-1-deoxy-D-ribulose 5-phosphate. The protein operates within amino-acid biosynthesis; L-tryptophan biosynthesis; L-tryptophan from chorismate: step 3/5. This Nostoc punctiforme (strain ATCC 29133 / PCC 73102) protein is N-(5'-phosphoribosyl)anthranilate isomerase.